Here is a 267-residue protein sequence, read N- to C-terminus: Methylglyoxal reductase DkgB (267 aa).

Tyr-39 (proton donor) is an active-site residue. His-97 provides a ligand contact to substrate. Residue 179-231 (MTLAYGKALKDEVIARIAAKHNATPAQVILAWAMGEGYSVIPSSTRRENLASS) participates in NADP(+) binding.

This sequence belongs to the aldo/keto reductase family. Monomer.

Its subcellular location is the cytoplasm. It catalyses the reaction hydroxyacetone + NADP(+) = methylglyoxal + NADPH + H(+). Its function is as follows. Aldo-keto reductase that significantly contributes to cellular methylglyoxal detoxification by catalyzing the NADPH-dependent conversion of methylglyoxal to acetol. This chain is Methylglyoxal reductase DkgB, found in Salmonella typhimurium (strain LT2 / SGSC1412 / ATCC 700720).